Consider the following 384-residue polypeptide: 2-isopropylmalate synthase 2 (384 aa).

A Pyruvate carboxyltransferase domain is found at 9–260 (VYIVDTTLRD…DLGIDTSRFR (252 aa)). Mn(2+)-binding residues include Asp-18, His-198, His-200, and Asn-234.

It belongs to the alpha-IPM synthase/homocitrate synthase family. LeuA type 1 subfamily. Homodimer. Requires Mn(2+) as cofactor.

The protein resides in the cytoplasm. The enzyme catalyses 3-methyl-2-oxobutanoate + acetyl-CoA + H2O = (2S)-2-isopropylmalate + CoA + H(+). The protein operates within amino-acid biosynthesis; L-leucine biosynthesis; L-leucine from 3-methyl-2-oxobutanoate: step 1/4. Its function is as follows. Catalyzes the condensation of the acetyl group of acetyl-CoA with 3-methyl-2-oxobutanoate (2-ketoisovalerate) to form 3-carboxy-3-hydroxy-4-methylpentanoate (2-isopropylmalate). This is 2-isopropylmalate synthase 2 from Caldanaerobacter subterraneus subsp. tengcongensis (strain DSM 15242 / JCM 11007 / NBRC 100824 / MB4) (Thermoanaerobacter tengcongensis).